The sequence spans 348 residues: Rhodopsin (348 aa).

M1 is modified (N-acetylmethionine). Topologically, residues 1 to 36 (MNGTEGLNFYVPFSNKTGVVRSPFEYPQYYLAEPWQ) are extracellular. Residues N2 and N15 are each glycosylated (N-linked (GlcNAc...) asparagine). Residues 37 to 61 (FSVLAAYMFLLIVLGFPINFLTLYV) form a helical membrane-spanning segment. Topologically, residues 62–73 (TVQHKKLRTPLN) are cytoplasmic. A helical membrane pass occupies residues 74–96 (YIPLNLAVANLFMVFGGFTTTLY). Over 97–110 (TSLHAYFVFGPTGC) the chain is Extracellular. Cysteines 110 and 187 form a disulfide. A helical membrane pass occupies residues 111–133 (NLEGFFATLGGEIALWSLVVLAI). Residues 134 to 136 (ERY) carry the 'Ionic lock' involved in activated form stabilization motif. Over 134–152 (ERYVVVCKPMSNFRFGENH) the chain is Cytoplasmic. Residues 153–173 (AIMGLALTWVMAMACAAPPLV) traverse the membrane as a helical segment. The Extracellular portion of the chain corresponds to 174 to 202 (GWSRYIPEGMQCSCGIDYYTSRQEVNNES). A Zn(2+)-binding site is contributed by E201. The chain crosses the membrane as a helical span at residues 203 to 224 (FVIYMFVVHFTIPLVIIFFCYG). Topologically, residues 225 to 252 (QLVFTVKEAAAQQQESATTQKAEKEVTR) are cytoplasmic. The helical transmembrane segment at 253–274 (MVIIMVVAFLICWVPYASVAFY) threads the bilayer. The Extracellular segment spans residues 275–286 (IFTHQGSDFGPI). A Zn(2+)-binding site is contributed by Q279. Residues 287-308 (FMTIPSFFAKSSSIYNPVIYIM) traverse the membrane as a helical segment. K296 is modified (N6-(retinylidene)lysine). Residues 309 to 348 (MNKQLRNCMLTTLCCGRNPLGDDEASTTASKTETSQVAPA) are Cytoplasmic-facing. S-palmitoyl cysteine attachment occurs at residues C322 and C323. Residues 330 to 348 (DDEASTTASKTETSQVAPA) form an interaction with SAG region. S334 is modified (phosphoserine). A phosphothreonine mark is found at T335 and T336. Position 338 is a phosphoserine (S338). A phosphothreonine mark is found at T340 and T342. S343 is subject to Phosphoserine.

The protein belongs to the G-protein coupled receptor 1 family. Opsin subfamily. Homodimer. May form a complex composed of RHO, GRK1 and RCVRN in a Ca(2+)-dependent manner; RCVRN prevents the interaction between GRK1 and RHO. Interacts with GRK1. Interacts (phosphorylated form) with SAG. Interacts with GNAT1. Interacts with GNAT3. SAG and G-proteins compete for a common binding site. Interacts with PRCD; the interaction promotes PRCD stability. Forms a complex with ASAP1 and ARF4. Forms a complex with ASAP1, RAB11A, Rabin8/RAB3IP, ARF4 and RAB11FIP3; the complex regulates Golgi-to-cilia rhodopsin/RHO transport in photoreceptors. In terms of processing, phosphorylated on some or all of the serine and threonine residues present in the C-terminal region. Contains one covalently linked retinal chromophore. Upon light absorption, the covalently bound 11-cis-retinal is converted to all-trans-retinal. After hydrolysis of the Schiff base and release of the covalently bound all-trans-retinal, active rhodopsin is regenerated by binding of a fresh molecule of 11-cis-retinal.

Its subcellular location is the membrane. The protein resides in the cell projection. It localises to the cilium. It is found in the photoreceptor outer segment. Its function is as follows. Photoreceptor required for image-forming vision at low light intensity. Required for photoreceptor cell viability after birth. Light-induced isomerization of 11-cis to all-trans retinal triggers a conformational change that activates signaling via G-proteins. Subsequent receptor phosphorylation mediates displacement of the bound G-protein alpha subunit by the arrestin SAG and terminates signaling. The protein is Rhodopsin (RHO) of Globicephala melas (Long-finned pilot whale).